We begin with the raw amino-acid sequence, 193 residues long: 3-isopropylmalate dehydratase small subunit (193 aa).

The protein belongs to the LeuD family. LeuD type 1 subfamily. Heterodimer of LeuC and LeuD.

The enzyme catalyses (2R,3S)-3-isopropylmalate = (2S)-2-isopropylmalate. Its pathway is amino-acid biosynthesis; L-leucine biosynthesis; L-leucine from 3-methyl-2-oxobutanoate: step 2/4. Catalyzes the isomerization between 2-isopropylmalate and 3-isopropylmalate, via the formation of 2-isopropylmaleate. This Bacillus cereus (strain AH820) protein is 3-isopropylmalate dehydratase small subunit.